A 980-amino-acid chain; its full sequence is Peroxisomal ATPase PEX6 (980 aa).

Position 119 is an omega-N-methylarginine (Arg-119). ATP-binding positions include 470–477 (GPPGCGKT) and 744–751 (GPPGTGKT).

The protein belongs to the AAA ATPase family. As to quaternary structure, interacts with PEX1; forming the PEX1-PEX6 AAA ATPase complex, which is composed of a heterohexamer formed by a trimer of PEX1-PEX6 dimers. Interacts with PEX26; interaction is direct and promotes recruitment to peroxisomal membranes. Interacts with ZFAND6. In terms of tissue distribution, expressed in the retina, at higher levels in the photoreceptor layer at the joint between the outer and inner segments.

It localises to the cytoplasm. Its subcellular location is the cytosol. The protein localises to the peroxisome membrane. The protein resides in the cell projection. It is found in the cilium. It localises to the photoreceptor outer segment. It carries out the reaction ATP + H2O = ADP + phosphate + H(+). Its function is as follows. Component of the PEX1-PEX6 AAA ATPase complex, a protein dislocase complex that mediates the ATP-dependent extraction of the PEX5 receptor from peroxisomal membranes, an essential step for PEX5 recycling. Specifically recognizes PEX5 monoubiquitinated at 'Cys-11', and pulls it out of the peroxisome lumen through the PEX2-PEX10-PEX12 retrotranslocation channel. Extraction by the PEX1-PEX6 AAA ATPase complex is accompanied by unfolding of the TPR repeats and release of bound cargo from PEX5. The sequence is that of Peroxisomal ATPase PEX6 from Homo sapiens (Human).